The primary structure comprises 225 residues: PKHD-type hydroxylase HEAR3399 (225 aa).

Positions 77–177 constitute a Fe2OG dioxygenase domain; it reads RYMPPLFNRY…RVCSFFWLQS (101 aa). His95, Asp97, and His158 together coordinate Fe cation. Arg168 lines the 2-oxoglutarate pocket.

Requires Fe(2+) as cofactor. It depends on L-ascorbate as a cofactor.

This is PKHD-type hydroxylase HEAR3399 from Herminiimonas arsenicoxydans.